The following is a 1427-amino-acid chain: DNA-directed RNA polymerase subunit beta' (1427 aa).

Zn(2+) is bound by residues Cys-70, Cys-72, Cys-85, and Cys-88. Mg(2+) contacts are provided by Asp-461, Asp-463, and Asp-465. Zn(2+) is bound by residues Cys-838, Cys-912, Cys-919, and Cys-922.

Belongs to the RNA polymerase beta' chain family. In terms of assembly, the RNAP catalytic core consists of 2 alpha, 1 beta, 1 beta' and 1 omega subunit. When a sigma factor is associated with the core the holoenzyme is formed, which can initiate transcription. Mg(2+) is required as a cofactor. Requires Zn(2+) as cofactor.

It carries out the reaction RNA(n) + a ribonucleoside 5'-triphosphate = RNA(n+1) + diphosphate. Its function is as follows. DNA-dependent RNA polymerase catalyzes the transcription of DNA into RNA using the four ribonucleoside triphosphates as substrates. The sequence is that of DNA-directed RNA polymerase subunit beta' from Sorangium cellulosum (strain So ce56) (Polyangium cellulosum (strain So ce56)).